An 810-amino-acid chain; its full sequence is MPNQGEDCYFFFYSTCTKGDSCPFRHCEAAIGNETVCTLWQEGRCFRQVCRFRHMEIDKKRSEIPCYWENQPTGCQKLNCAFHHNRGRYVDGLFLPPSKTVLPTVPESPEEEVKASQLSVQQNKLSVQSNPSPQLRSVMKVESSENVPSPTHPPVVINAADDDEDDDDQFSEEGDETKTPTLQPTPEVHNGLRVTSVRKPAVNIKQGECLNFGIKTLEEIKSKKMKEKSKKQGEGSSGVSSLLLHPEPVPGPEKENVRTVVRTVTLSTKQGEEPLVRLSLTERLGKRKFSAGGDSDPPLKRSLAQRLGKKVEAPETNIDKTPKKAQVSKSLKERLGMSADPDNEDATDKVNKVGEIHVKTLEEILLERASQKRGELQTKLKTEGPSKTDDSTSGARSSSTIRIKTFSEVLAEKKHRQQEAERQKSKKDTTCIKLKIDSEIKKTVVLPPIVASRGQSEEPAGKTKSMQEVHIKTLEEIKLEKALRVQQSSESSTSSPSQHEATPGARRLLRITKRTGMKEEKNLQEGNEVDSQSSIRTEAKEASGETTGVDITKIQVKRCETMREKHMQKQQEREKSVLTPLRGDVASCNTQVAEKPVLTAVPGITRHLTKRLPTKSSQKVEVETSGIGDSLLNVKCAAQTLEKRGKAKPKVNVKPSVVKVVSSPKLAPKRKAVEMHAAVIAAVKPLSSSSVLQEPPAKKAAVAVVPLVSEDKSVTVPEAENPRDSLVLPPTQSSSDSSPPEVSGPSSSQMSMKTRRLSSASTGKPPLSVEDDFEKLIWEISGGKLEAEIDLDPGKDEDDLLLELSEMIDS.

C3H1-type zinc fingers lie at residues 2 to 29, 31 to 57, and 60 to 86; these read PNQG…HCEA, IGNE…HMEI, and KRSE…HHNR. Phosphoserine is present on Ser-108. Glycyl lysine isopeptide (Lys-Gly) (interchain with G-Cter in SUMO2) cross-links involve residues Lys-114 and Lys-124. Phosphoserine is present on Ser-132. 4 disordered regions span residues 139–194, 223–258, 285–351, and 367–432; these read MKVE…GLRV, KKMK…ENVR, GKRK…DKVN, and ERAS…TTCI. Lys-140 is covalently cross-linked (Glycyl lysine isopeptide (Lys-Gly) (interchain with G-Cter in SUMO2)). A phosphoserine mark is found at Ser-149 and Ser-171. Acidic residues predominate over residues 160–175; the sequence is ADDDEDDDDQFSEEGD. Position 290 is a phosphoserine (Ser-290). Basic and acidic residues-rich tracts occupy residues 309–322 and 367–390; these read KKVE…DKTP and ERAS…KTDD. Thr-321 carries the post-translational modification Phosphothreonine. Residues 362–423 are a coiled coil; that stretch reads EEILLERASQ…KHRQQEAERQ (62 aa). A Phosphoserine modification is found at Ser-370. A compositionally biased stretch (polar residues) spans 391 to 402; the sequence is STSGARSSSTIR. The segment covering 417–432 has biased composition (basic and acidic residues); the sequence is QQEAERQKSKKDTTCI. Residue Lys-478 forms a Glycyl lysine isopeptide (Lys-Gly) (interchain with G-Cter in SUMO2) linkage. Residues 482–549 are disordered; sequence ALRVQQSSES…KEASGETTGV (68 aa). A compositionally biased stretch (low complexity) spans 486–498; that stretch reads QQSSESSTSSPSQ. Residue Lys-619 forms a Glycyl lysine isopeptide (Lys-Gly) (interchain with G-Cter in SUMO2) linkage. Residues 715–768 form a disordered region; sequence TVPEAENPRDSLVLPPTQSSSDSSPPEVSGPSSSQMSMKTRRLSSASTGKPPLS. Low complexity predominate over residues 729 to 748; the sequence is PPTQSSSDSSPPEVSGPSSS. The span at 749–762 shows a compositional bias: polar residues; sequence QMSMKTRRLSSAST.

As to quaternary structure, interacts with TREX complex components THOC2, DDX39 and POLDIP3; the interactions are ATP-dependent. Interacts with PABPN1; this interaction retains ZC3H11A in nuclear speckles. Interacts with KPNA3.

It is found in the nucleus. The protein localises to the nucleus speckle. Functionally, through its association with TREX complex components, may participate in the export and post-transcriptional coordination of selected mRNA transcripts, including those required to maintain the metabolic processes in embryonic cells. Binds RNA. Its function is as follows. (Microbial infection) Plays a role in efficient growth of several nuclear-replicating viruses such as HIV-1, influenza virus or herpes simplex virus 1/HHV-1. Required for efficient viral mRNA export. May be required for proper polyadenylation of adenovirus type 5/HAdV-5 capsid mRNA. In Homo sapiens (Human), this protein is Zinc finger CCCH domain-containing protein 11A (ZC3H11A).